We begin with the raw amino-acid sequence, 433 residues long: GTPase Der (433 aa).

2 consecutive EngA-type G domains span residues 5-167 (KKVL…GEAN) and 174-349 (IKVG…DQLE). GTP contacts are provided by residues 11–18 (GRPNVGKS), 58–62 (DTGGF), 119–122 (NKVD), 180–187 (GKPNSGKS), 227–231 (DTAGI), and 292–295 (SKWD). The 80-residue stretch at 350–429 (FKTSTPDLNK…PILVELREKI (80 aa)) folds into the KH-like domain.

This sequence belongs to the TRAFAC class TrmE-Era-EngA-EngB-Septin-like GTPase superfamily. EngA (Der) GTPase family. As to quaternary structure, associates with the 50S ribosomal subunit.

Functionally, GTPase that plays an essential role in the late steps of ribosome biogenesis. The polypeptide is GTPase Der (Borreliella afzelii (strain PKo) (Borrelia afzelii)).